The chain runs to 145 residues: uncharacterized protein (145 aa).

The helical transmembrane segment at isoleucine 4–asparagine 24 threads the bilayer.

The protein localises to the membrane. This is an uncharacterized protein from Methanocaldococcus jannaschii (strain ATCC 43067 / DSM 2661 / JAL-1 / JCM 10045 / NBRC 100440) (Methanococcus jannaschii).